The following is a 251-amino-acid chain: Flap endonuclease Xni (251 aa).

Asp-104 lines the Mg(2+) pocket. Positions 160 to 249 (VLPRQLPDYW…IDGNLQQLRL (90 aa)) constitute a 5'-3' exonuclease domain. K(+) is bound by residues Leu-171, Ala-172, Pro-180, Val-182, and Ile-185. The interaction with DNA stretch occupies residues 184–189 (GIGPKS).

Belongs to the Xni family. Requires Mg(2+) as cofactor. K(+) serves as cofactor.

Has flap endonuclease activity. During DNA replication, flap endonucleases cleave the 5'-overhanging flap structure that is generated by displacement synthesis when DNA polymerase encounters the 5'-end of a downstream Okazaki fragment. This is Flap endonuclease Xni from Salmonella choleraesuis (strain SC-B67).